The following is a 1436-amino-acid chain: Nuclear pore complex protein Nup160 (1436 aa).

Phosphoserine occurs at positions 44, 490, 949, and 1157.

As to quaternary structure, part of the nuclear pore complex (NPC). Forms part of the NUP160 subcomplex in the nuclear pore which is composed of NUP160, NUP133, NUP107 and NUP96. This complex plays a role in RNA export and in tethering NUP98 and NUP153 to the nucleus.

It localises to the nucleus. The protein resides in the nuclear pore complex. In terms of biological role, functions as a component of the nuclear pore complex (NPC). Involved in poly(A)+ RNA transport. In Homo sapiens (Human), this protein is Nuclear pore complex protein Nup160 (NUP160).